A 1411-amino-acid polypeptide reads, in one-letter code: Early endosome antigen 1 (1411 aa).

Residues 1 to 27 (MFRRILQRTPGRVGSQGSDLDSSATPI) form a disordered region. Over residues 15–27 (SQGSDLDSSATPI) the composition is skewed to polar residues. The C2H2-type zinc finger occupies 41–64 (FICPQCMKSLGSADELFKHYQAVH). Phosphoserine is present on residues serine 52 and serine 70. Residues 78 to 1348 (LALTRDDITL…IKHTQALNRK (1271 aa)) adopt a coiled-coil conformation. Disordered stretches follow at residues 476-501 (STELQHQLEKSKQQHQEQQALQQSAT) and 1189-1217 (EKESQQLMREQVKKEEEKRKEEFSEKEAK). The segment covering 481–490 (HQLEKSKQQH) has biased composition (basic and acidic residues). Residues 491 to 500 (QEQQALQQSA) are compositionally biased toward low complexity. Residues 1352–1410 (DNEVQNCMSCGKCFSVTVRRHHCRQCGNIFCAECSTKNALTPSSKKPVRVCDACFNDLQ) form an FYVE-type zinc finger. 8 residues coordinate Zn(2+): cysteine 1358, cysteine 1361, cysteine 1374, cysteine 1377, cysteine 1382, cysteine 1385, cysteine 1402, and cysteine 1405.

As to quaternary structure, homodimer. Binds STX6. Binds RAB5A, RAB5B, RAB5C and RAB22A that have been activated by GTP-binding. Interacts with ERBB2. Interacts with RAB31. Interacts with SAMD9 and SAMD9L. May interact with PLEKHF2.

It is found in the cytoplasm. Its subcellular location is the early endosome membrane. In terms of biological role, binds phospholipid vesicles containing phosphatidylinositol 3-phosphate and participates in endosomal trafficking. In Mus musculus (Mouse), this protein is Early endosome antigen 1 (Eea1).